The chain runs to 407 residues: Tryptophan synthase beta chain (407 aa).

Lys-86 carries the N6-(pyridoxal phosphate)lysine modification.

It belongs to the TrpB family. In terms of assembly, tetramer of two alpha and two beta chains. Pyridoxal 5'-phosphate serves as cofactor.

The enzyme catalyses (1S,2R)-1-C-(indol-3-yl)glycerol 3-phosphate + L-serine = D-glyceraldehyde 3-phosphate + L-tryptophan + H2O. Its pathway is amino-acid biosynthesis; L-tryptophan biosynthesis; L-tryptophan from chorismate: step 5/5. The beta subunit is responsible for the synthesis of L-tryptophan from indole and L-serine. The sequence is that of Tryptophan synthase beta chain from Shewanella woodyi (strain ATCC 51908 / MS32).